Reading from the N-terminus, the 657-residue chain is Glycogen debranching enzyme (657 aa).

The active-site Nucleophile is the Asp-336. The Proton donor role is filled by Glu-371. A compositionally biased stretch (basic and acidic residues) spans 458-467; the sequence is NEANGEENRD. A disordered region spans residues 458 to 479; it reads NEANGEENRDGTNNNYSNNHGK.

This sequence belongs to the glycosyl hydrolase 13 family.

The enzyme catalyses Hydrolysis of (1-&gt;6)-alpha-D-glucosidic linkages to branches with degrees of polymerization of three or four glucose residues in limit dextrin.. Its pathway is glycan degradation; glycogen degradation. Its function is as follows. Removes maltotriose and maltotetraose chains that are attached by 1,6-alpha-linkage to the limit dextrin main chain, generating a debranched limit dextrin. The sequence is that of Glycogen debranching enzyme from Escherichia coli O8 (strain IAI1).